We begin with the raw amino-acid sequence, 129 residues long: MYDNLKSLGITQPEDVDRYSLRQEANNDILKIYFRKDKGEFFAKSVKFKYPRQRKTVVSDNASHGYKEINEINPNLRYVIDELDQLCKRDQIEVDLKRKILDDLRHLESVVTNKIAEIEADLEKLTNGR.

It belongs to the UPF0325 family.

In Yersinia pseudotuberculosis serotype IB (strain PB1/+), this protein is UPF0325 protein YPTS_3127.